The chain runs to 602 residues: MSQKIYFKILRFDKTHNDHVYLPGENSVENFQTEGSCVPGRLYFCDPSDPKQNICRYLHYGDVLVDITLPTNDPDFKMIVDPSGTKCCANKIIIGTERELSDPETFAYMASHGVDIHKNYIIHWAFKNFHDRVLFYLLKTNLNENRLRIVEHIFKNPSSLISNRNYNFYIVNFLQRFKKHLNSLTDNQYSDIITNLINLSNKIIEKYFEDMTGNKNFGLDIPEKDWCSYIIENDLDKGSISKILDWSFKNNKKMIIEYVISLFIEDYHYLEKIFSLSCKYHDSRIAEILIKKSINKERCLISACEAGFLEIVECLVKQDVNINLLKGTPLVTACQFGHLLIVDFLVNNSADIHIRDNAPILYACRYGHVDIVDYLIGKGIDIHTVSSQALINACNRGHLNVMELLVEKGADIRSVENILVVEACRNTNADILRFLVRIGVDVLSKGVEPLIVACERGQLAIVQYLIDIGIDICANDNEALIKSCRSGFANIVNLLIENGADVKARDNEALIIACEKCNHTIVTILVSNGADITARNNEALIRACHNEAVGKYFIDFLIEKGADVHARNDIVFDFIHKLFAGNIPKSLKFPFSKNQSDSKLIH.

ANK repeat units follow at residues 133 to 162 (VLFYLLKTNLNENRLRIVEHIFKNPSSLIS), 269 to 294 (YLEKIFSLSCKYHDSRIAEILIKKSI), 295 to 324 (NKERCLISACEAGFLEIVECLVKQDVNINL), 325 to 354 (LKGTPLVTACQFGHLLIVDFLVNNSADIHI), 355 to 384 (RDNAPILYACRYGHVDIVDYLIGKGIDIHT), 386 to 414 (SSQALINACNRGHLNVMELLVEKGADIRS), 416 to 444 (ENILVVEACRNTNADILRFLVRIGVDVLS), 445 to 474 (KGVEPLIVACERGQLAIVQYLIDIGIDICA), 476 to 504 (DNEALIKSCRSGFANIVNLLIENGADVKA), 506 to 534 (DNEALIIACEKCNHTIVTILVSNGADITA), and 536 to 566 (NNEALIRACHNEAVGKYFIDFLIEKGADVHA).

In Acanthamoeba polyphaga mimivirus (APMV), this protein is Putative ankyrin repeat protein L100.